Consider the following 188-residue polypeptide: Elongation factor P (188 aa).

It belongs to the elongation factor P family.

The protein resides in the cytoplasm. Its pathway is protein biosynthesis; polypeptide chain elongation. Involved in peptide bond synthesis. Stimulates efficient translation and peptide-bond synthesis on native or reconstituted 70S ribosomes in vitro. Probably functions indirectly by altering the affinity of the ribosome for aminoacyl-tRNA, thus increasing their reactivity as acceptors for peptidyl transferase. The sequence is that of Elongation factor P from Anaplasma marginale (strain Florida).